A 294-amino-acid chain; its full sequence is Foldase protein PrsA 1 (294 aa).

The N-terminal stretch at Met1–Gly21 is a signal peptide. A lipid anchor (N-palmitoyl cysteine) is attached at Cys22. The S-diacylglycerol cysteine moiety is linked to residue Cys22. In terms of domain architecture, PpiC spans Glu135–Lys226.

This sequence belongs to the PrsA family.

The protein localises to the cell membrane. The enzyme catalyses [protein]-peptidylproline (omega=180) = [protein]-peptidylproline (omega=0). Plays a major role in protein secretion by helping the post-translocational extracellular folding of several secreted proteins. The polypeptide is Foldase protein PrsA 1 (prsA1) (Listeria monocytogenes serovar 1/2a (strain ATCC BAA-679 / EGD-e)).